The following is a 137-amino-acid chain: Peptide methionine sulfoxide reductase MsrB (137 aa).

The region spanning alanine 7–glycine 129 is the MsrB domain. The Zn(2+) site is built by cysteine 46, cysteine 49, cysteine 95, and cysteine 98. Residue cysteine 118 is the Nucleophile of the active site.

It belongs to the MsrB Met sulfoxide reductase family. The cofactor is Zn(2+).

The catalysed reaction is L-methionyl-[protein] + [thioredoxin]-disulfide + H2O = L-methionyl-(R)-S-oxide-[protein] + [thioredoxin]-dithiol. The sequence is that of Peptide methionine sulfoxide reductase MsrB from Shigella dysenteriae serotype 1 (strain Sd197).